The chain runs to 424 residues: MPEVKVPELAESITEGTIAEWLKQVGDSVDKGEAIVELETDKVNVEVVSEEAGVLQELLANEGDTVEVGQAIAVVGEGSGNNTSEAPAKQEAPKQETETSTDDKSAQPAEATSNDTDDKSQDNNQRVNATPSARKYAREKGIDLSEIAAASNDVVRKEHVDQSQTQTSTQQQAQPAAKEETKKLTQQNPSKPVIREKMSRRKKTAAKKLLEVSNNTAMLTTFNEIDMTNVMDLRKRKKEQFIKDHDGTKLGFMSFFTKAAVAALKKYPEVNAEIDGDDMITKQYYDIGVAVSTEDGLLVPFVRDCDKKNFAEIEDEIGNLAKKARDKKLGLDDMVNGSFTITNGGIFGSMMSTPIINGSQAAILGMHSIITRPIAIDADTIENRPMMYIALSYDHRIIDGKEAVGFLKTIKELIENPEDLLLES.

Positions 1–76 (MPEVKVPELA…EVGQAIAVVG (76 aa)) constitute a Lipoyl-binding domain. Lys42 carries the post-translational modification N6-lipoyllysine. 2 disordered regions span residues 76 to 138 (GEGS…KYAR) and 155 to 204 (VRKE…RKKT). Residues 91–105 (EAPKQETETSTDDKS) are compositionally biased toward basic and acidic residues. A compositionally biased stretch (polar residues) spans 122-131 (DNNQRVNATP). Positions 128-164 (NATPSARKYAREKGIDLSEIAAASNDVVRKEHVDQSQ) constitute a Peripheral subunit-binding (PSBD) domain. The span at 162–176 (QSQTQTSTQQQAQPA) shows a compositional bias: low complexity. Residues His395 and Asp399 contribute to the active site.

This sequence belongs to the 2-oxoacid dehydrogenase family. As to quaternary structure, forms a 24-polypeptide structural core with octahedral symmetry. Part of the 2-oxoglutarate dehydrogenase (OGDH) complex composed of E1 (2-oxoglutarate dehydrogenase), E2 (dihydrolipoamide succinyltransferase) and E3 (dihydrolipoamide dehydrogenase); the complex contains multiple copies of the three enzymatic components (E1, E2 and E3). It depends on (R)-lipoate as a cofactor.

The enzyme catalyses N(6)-[(R)-dihydrolipoyl]-L-lysyl-[protein] + succinyl-CoA = N(6)-[(R)-S(8)-succinyldihydrolipoyl]-L-lysyl-[protein] + CoA. Its pathway is amino-acid degradation; L-lysine degradation via saccharopine pathway; glutaryl-CoA from L-lysine: step 6/6. Its function is as follows. E2 component of the 2-oxoglutarate dehydrogenase (OGDH) complex which catalyzes the second step in the conversion of 2-oxoglutarate to succinyl-CoA and CO(2). This Staphylococcus saprophyticus subsp. saprophyticus (strain ATCC 15305 / DSM 20229 / NCIMB 8711 / NCTC 7292 / S-41) protein is Dihydrolipoyllysine-residue succinyltransferase component of 2-oxoglutarate dehydrogenase complex (odhB).